We begin with the raw amino-acid sequence, 254 residues long: Pyruvate aldolase (254 aa).

His-48 acts as the Proton acceptor in catalysis. A divalent metal cation-binding residues include Glu-151 and Asp-177.

Belongs to the HpcH/HpaI aldolase family. A divalent metal cation serves as cofactor.

The catalysed reaction is D-glyceraldehyde + pyruvate = 2-dehydro-3-deoxy-L-galactonate. In terms of biological role, aldolase which can catalyze in vitro the aldolisation reaction between pyruvate (PA) and D-glyceraldehyde (D-GA) to form 2-dehydro-3-deoxy-L-galactonate. The protein is Pyruvate aldolase of Rhizobium etli (strain ATCC 51251 / DSM 11541 / JCM 21823 / NBRC 15573 / CFN 42).